The sequence spans 506 residues: Probable lipid II flippase MurJ (506 aa).

The next 13 helical transmembrane spans lie at 4 to 24, 86 to 106, 127 to 147, 153 to 173, 181 to 201, 232 to 252, 263 to 283, 308 to 328, 345 to 365, 377 to 397, 405 to 425, 436 to 456, and 474 to 494; these read YVVS…MGFV, TVIT…IIFA, VFGY…FVSV, IFFI…LSIF, IYSA…IPFA, IFGF…ASTL, AVVY…TVIF, ILLL…DYIL, TASV…FGFF, TPFY…VFGI, LALA…FIIL, ILFV…IYFF, and LMAA…VLGI.

The protein belongs to the MurJ/MviN family.

The protein resides in the cell inner membrane. It functions in the pathway cell wall biogenesis; peptidoglycan biosynthesis. In terms of biological role, involved in peptidoglycan biosynthesis. Transports lipid-linked peptidoglycan precursors from the inner to the outer leaflet of the cytoplasmic membrane. This is Probable lipid II flippase MurJ from Borreliella burgdorferi (strain ATCC 35210 / DSM 4680 / CIP 102532 / B31) (Borrelia burgdorferi).